The chain runs to 160 residues: Nucleotide-binding protein CJA_2652 (160 aa).

Belongs to the YajQ family.

In terms of biological role, nucleotide-binding protein. This Cellvibrio japonicus (strain Ueda107) (Pseudomonas fluorescens subsp. cellulosa) protein is Nucleotide-binding protein CJA_2652.